Consider the following 138-residue polypeptide: Basic phospholipase A2 Pla2Vb (138 aa).

The signal sequence occupies residues 1–16 (MRTLWIVAVWLMGVEG). Cystine bridges form between Cys-42/Cys-131, Cys-44/Cys-60, Cys-59/Cys-111, Cys-65/Cys-138, Cys-66/Cys-104, Cys-73/Cys-97, and Cys-91/Cys-102. Residues Tyr-43, Gly-45, and Gly-47 each contribute to the Ca(2+) site. Residue His-63 is part of the active site. Asp-64 lines the Ca(2+) pocket. The active site involves Asp-105.

It belongs to the phospholipase A2 family. Group II subfamily. D49 sub-subfamily. It depends on Ca(2+) as a cofactor. As to expression, expressed by the venom gland.

It is found in the secreted. It catalyses the reaction a 1,2-diacyl-sn-glycero-3-phosphocholine + H2O = a 1-acyl-sn-glycero-3-phosphocholine + a fatty acid + H(+). In terms of biological role, snake venom phospholipase A2 (PLA2) that exhibits medium anticoagulant effects by binding to factor Xa (F10) and inhibiting the prothrombinase activity (IC(50) is 90 nM). PLA2 catalyzes the calcium-dependent hydrolysis of the 2-acyl groups in 3-sn-phosphoglycerides. The sequence is that of Basic phospholipase A2 Pla2Vb from Vipera berus berus (Common viper).